A 397-amino-acid chain; its full sequence is MSESVHTNTSLWSKGMKAVIVAQFLSAFGDNALLFATLALLKAQFYPEWSQPILQMVFVGAYILFAPFVGQVADSFAKGRVMMFANGLKLLGAASICFGINPFLGYTLVGVGAAAYSPAKYGILGELTTGSKLVKANGLMEASTIAAILLGSVAGGVLADWHVLVALAACALAYGGAVVANIYIPKLAAARPGQSWNLINMTRSFLNACTSLWRNGETRFSLVGTSLFWGAGVTLRFLLVLWVPVALGITDNSTPTYLNAMVAIGIVVGAGAAAKLVTLETVSRCMPAGILIGVVVLIFSLQHELLPAYALLMLIGVMGGFFVVPLNALLQERGKKSVGAGNAIAVQNLGENSAMLLMLGIYSLAVMVGIPVVPIGIGFGALFALAITALWIWQRRH.

Residues 1–17 (MSESVHTNTSLWSKGMK) are Periplasmic-facing. The helical transmembrane segment at 18–38 (AVIVAQFLSAFGDNALLFATL) threads the bilayer. Over 39–52 (ALLKAQFYPEWSQP) the chain is Cytoplasmic. The helical transmembrane segment at 53–73 (ILQMVFVGAYILFAPFVGQVA) threads the bilayer. The Periplasmic portion of the chain corresponds to 74–90 (DSFAKGRVMMFANGLKL). The helical transmembrane segment at 91–111 (LGAASICFGINPFLGYTLVGV) threads the bilayer. Residues 112–144 (GAAAYSPAKYGILGELTTGSKLVKANGLMEAST) are Cytoplasmic-facing. The helical transmembrane segment at 145-165 (IAAILLGSVAGGVLADWHVLV) threads the bilayer. A166 is a topological domain (periplasmic). The helical transmembrane segment at 167 to 187 (LAACALAYGGAVVANIYIPKL) threads the bilayer. The Cytoplasmic portion of the chain corresponds to 188-226 (AAARPGQSWNLINMTRSFLNACTSLWRNGETRFSLVGTS). The chain crosses the membrane as a helical span at residues 227-247 (LFWGAGVTLRFLLVLWVPVAL). The Periplasmic portion of the chain corresponds to 248–256 (GITDNSTPT). Residues 257-277 (YLNAMVAIGIVVGAGAAAKLV) traverse the membrane as a helical segment. Residues 278-280 (TLE) are Cytoplasmic-facing. Residues 281 to 301 (TVSRCMPAGILIGVVVLIFSL) traverse the membrane as a helical segment. Residues 302 to 304 (QHE) are Periplasmic-facing. A helical membrane pass occupies residues 305-325 (LLPAYALLMLIGVMGGFFVVP). The Cytoplasmic segment spans residues 326-343 (LNALLQERGKKSVGAGNA). Residues 344-364 (IAVQNLGENSAMLLMLGIYSL) form a helical membrane-spanning segment. Residues 365–366 (AV) lie on the Periplasmic side of the membrane. A helical transmembrane segment spans residues 367–387 (MVGIPVVPIGIGFGALFALAI). The Cytoplasmic portion of the chain corresponds to 388-397 (TALWIWQRRH).

The protein belongs to the major facilitator superfamily. LplT (TC 2.A.1.42) family.

The protein resides in the cell inner membrane. Catalyzes the facilitated diffusion of 2-acyl-glycero-3-phosphoethanolamine (2-acyl-GPE) into the cell. The chain is Lysophospholipid transporter LplT from Shigella boydii serotype 4 (strain Sb227).